We begin with the raw amino-acid sequence, 387 residues long: Formate-dependent phosphoribosylglycinamide formyltransferase (387 aa).

Residues 12–13 (EL) and Glu-72 contribute to the N(1)-(5-phospho-beta-D-ribosyl)glycinamide site. ATP is bound by residues Arg-104, Lys-145, 150-155 (SSGKGQ), 185-188 (EEFI), and Glu-193. The region spanning 109–300 (DLAARELGLA…EFELHLRAVL (192 aa)) is the ATP-grasp domain. 2 residues coordinate Mg(2+): Glu-258 and Glu-270. N(1)-(5-phospho-beta-D-ribosyl)glycinamide-binding positions include Asp-277, Lys-347, and 354-355 (RR).

This sequence belongs to the PurK/PurT family. Homodimer.

The catalysed reaction is N(1)-(5-phospho-beta-D-ribosyl)glycinamide + formate + ATP = N(2)-formyl-N(1)-(5-phospho-beta-D-ribosyl)glycinamide + ADP + phosphate + H(+). The protein operates within purine metabolism; IMP biosynthesis via de novo pathway; N(2)-formyl-N(1)-(5-phospho-D-ribosyl)glycinamide from N(1)-(5-phospho-D-ribosyl)glycinamide (formate route): step 1/1. Involved in the de novo purine biosynthesis. Catalyzes the transfer of formate to 5-phospho-ribosyl-glycinamide (GAR), producing 5-phospho-ribosyl-N-formylglycinamide (FGAR). Formate is provided by PurU via hydrolysis of 10-formyl-tetrahydrofolate. This chain is Formate-dependent phosphoribosylglycinamide formyltransferase, found in Anaeromyxobacter dehalogenans (strain 2CP-C).